Here is a 777-residue protein sequence, read N- to C-terminus: Protein argonaute (777 aa).

The interval 1–107 (MAPVQAADEM…ARLDDALEEA (107 aa)) is N-terminal domain. The segment at 108-182 (LPKYAAVKKR…TIGMRYDIEA (75 aa)) is linker L1. Positions 183–243 (SLRDLLEAGI…VNVNDAKLEG (61 aa)) are PAZ domain. The segment at 244-341 (SKENFTRCLS…DRTGAKSAEY (98 aa)) is linker L2. Residues 342–509 (AWRGLSQFGP…SIATYAKLNG (168 aa)) are mid domain. Residues 445–757 (GIVVLFEDHA…IAELLGRLKS (313 aa)) form the Piwi domain. The segment at 510 to 777 (TPWTVNHDKA…IKLKWSRWFL (268 aa)) is PIWI domain. Leu-777 is a Mg(2+) binding site.

Belongs to the argonaute family. Long pAgo subfamily. Requires Mg(2+) as cofactor.

Functionally, a catalytically inactive argonaute protein. Binds 5'-phosphorylated RNA as the guide (gRNA) and short DNA as target DNA (tDNA); does not bind other nucleic acid combinations, does not bind tDNA alone. Has highest affinity for gRNA that begins with 5'-phospho-U and poor affinity for gRNA with 5'-OH. Upon expression in E.coli, plasmid sequences are found in RsAgo, its induction leads to plasmid degradation and suppression of genes encoded on foreign plasmids, suggesting it may also interfere with transcription. Does not interact with preformed gRNA:tDNA duplexes. Mismatches and nt bulges are tolerated in the ternary complex, however, they significantly reduce the affinity of RsAgo:gRNA for tDNA. Mismatched tDNA can cause dissociation of gRNA from RsAgo. In situ binds 2 populations of RNA (15-19 and 45 nucleotides, nt) and a population of ssDNA 22-24 nt in length. The small sense RNA is probably derived from mRNA degradation and strongly enriched for U in the first and U/C in the second positions. The small DNA is enriched for sequences complementary to the RNA, with 3 nt overhangs on both ends; another nuclease may trim the ends. The sequences are largely derived from exogenous plasmids or genome-encoded foreign elements such as prophages and transposons. Forms a ternary complex with gRNA and double-stranded tDNA only when the tDNA is open. This is Protein argonaute from Cereibacter sphaeroides (strain ATCC 17025 / ATH 2.4.3) (Rhodobacter sphaeroides).